A 287-amino-acid polypeptide reads, in one-letter code: MTAQKLDGKATAAAIKSELAERVAALRDQGVVPGLGTVLVGEDPASHQYVAGKHRDCAQVGIESIRVDLPADVTEEELAQKIRGLNANPHCTGYIVQLPLPRHIDTNWALNLIDPNKDADGLTPASLGRLVLNEPAPLPCTPRGIVELLTRHGIELPGANVCVVGRGTTVGRPLGLLLTRRSENCTVTLCHTGTRNLAEHTRQADIIIGAAGSPGLINADMIREGAVLVDVGVSRTPEGKIQGDFTADVWEKAAWVSPNPGGVGPMTRAMLLSNVVDRAERLTADPS.

NADP(+) contacts are provided by residues 165–167 (GRG), Thr-192, and Val-233.

It belongs to the tetrahydrofolate dehydrogenase/cyclohydrolase family. Homodimer.

It catalyses the reaction (6R)-5,10-methylene-5,6,7,8-tetrahydrofolate + NADP(+) = (6R)-5,10-methenyltetrahydrofolate + NADPH. The catalysed reaction is (6R)-5,10-methenyltetrahydrofolate + H2O = (6R)-10-formyltetrahydrofolate + H(+). It functions in the pathway one-carbon metabolism; tetrahydrofolate interconversion. Catalyzes the oxidation of 5,10-methylenetetrahydrofolate to 5,10-methenyltetrahydrofolate and then the hydrolysis of 5,10-methenyltetrahydrofolate to 10-formyltetrahydrofolate. This is Bifunctional protein FolD from Cutibacterium acnes (strain DSM 16379 / KPA171202) (Propionibacterium acnes).